The sequence spans 183 residues: Glutathione-regulated potassium-efflux system ancillary protein KefG (183 aa).

The protein belongs to the NAD(P)H dehydrogenase (quinone) family. KefG subfamily. Interacts with KefB.

Its subcellular location is the cell inner membrane. The enzyme catalyses a quinone + NADH + H(+) = a quinol + NAD(+). It carries out the reaction a quinone + NADPH + H(+) = a quinol + NADP(+). Regulatory subunit of a potassium efflux system that confers protection against electrophiles. Required for full activity of KefB. This Enterobacter sp. (strain 638) protein is Glutathione-regulated potassium-efflux system ancillary protein KefG.